The primary structure comprises 571 residues: Decapping 5-like protein (571 aa).

The segment covering 1–17 has biased composition (low complexity); sequence MASESSQSSSPSSSQPP. Disordered regions lie at residues 1–27, 102–141, 159–187, and 258–305; these read MASE…SPGN, LQVN…ISGY, LSSK…GSLT, and SQVV…SEAQ. Positions 25-108 constitute a Sm domain; sequence PGNNVGDTFI…IKDLQVNPSP (84 aa). Composition is skewed to polar residues over residues 104–138 and 167–187; these read VNPS…SSPI and TQHS…GSLT. The segment covering 264–279 has biased composition (low complexity); the sequence is SPDVSSNQSYSSNPSP. A compositionally biased stretch (polar residues) spans 293–305; sequence SVSSNLSPPSEAQ. The DFDF domain occupies 419–455; the sequence is RIPSSSIEYTEEFDFEAMNEKFKKSELWGYLGRNNQR. Positions 474 to 489 match the FFD box motif; it reads PAYNKDDFFDTISCNQ. The TFG box motif lies at 498–518; the sequence is QQHNQFPEHMRQVPEAFGNNF.

It belongs to the LSM14 family. Homodimer. Component of the decapping complex.

The protein localises to the cytoplasm. The protein resides in the P-body. In terms of biological role, as a component of the decapping complex, involved in the degradation of mRNAs. Promotes P-body formation. Translational repressor. This Arabidopsis thaliana (Mouse-ear cress) protein is Decapping 5-like protein (DCP5-L).